The following is a 469-amino-acid chain: Glutamate--tRNA ligase (469 aa).

Residues 11-21 (PSPTGFIHLGN) carry the 'HIGH' region motif. The segment covering 118 to 131 (GEKPRYDGTWRPEP) has biased composition (basic and acidic residues). Residues 118 to 138 (GEKPRYDGTWRPEPGKVLPEP) are disordered. Positions 243-247 (KMSKR) match the 'KMSKS' region motif. ATP is bound at residue Lys246.

The protein belongs to the class-I aminoacyl-tRNA synthetase family. Glutamate--tRNA ligase type 1 subfamily. In terms of assembly, monomer.

The protein localises to the cytoplasm. It carries out the reaction tRNA(Glu) + L-glutamate + ATP = L-glutamyl-tRNA(Glu) + AMP + diphosphate. Its function is as follows. Catalyzes the attachment of glutamate to tRNA(Glu) in a two-step reaction: glutamate is first activated by ATP to form Glu-AMP and then transferred to the acceptor end of tRNA(Glu). This chain is Glutamate--tRNA ligase, found in Burkholderia thailandensis (strain ATCC 700388 / DSM 13276 / CCUG 48851 / CIP 106301 / E264).